The sequence spans 233 residues: Orotidine 5'-phosphate decarboxylase (233 aa).

Substrate-binding positions include Asp-9, Lys-31, 58 to 67, Thr-120, Arg-182, Gln-191, Gly-211, and Arg-212; that span reads DLKLHDIPNT. Residue Lys-60 is the Proton donor of the active site.

Belongs to the OMP decarboxylase family. Type 1 subfamily. As to quaternary structure, homodimer.

It catalyses the reaction orotidine 5'-phosphate + H(+) = UMP + CO2. Its pathway is pyrimidine metabolism; UMP biosynthesis via de novo pathway; UMP from orotate: step 2/2. In terms of biological role, catalyzes the decarboxylation of orotidine 5'-monophosphate (OMP) to uridine 5'-monophosphate (UMP). This chain is Orotidine 5'-phosphate decarboxylase, found in Listeria monocytogenes serotype 4a (strain HCC23).